The chain runs to 699 residues: Polyribonucleotide nucleotidyltransferase (699 aa).

Mg(2+) is bound by residues aspartate 485 and aspartate 491. Residues 552–611 enclose the KH domain; that stretch reads PRITTIKINPEKIRDVIGKGGAVIRALTEETGTTIELEDDGTVKIASSNGEATKEAIRRI. Positions 621 to 689 constitute an S1 motif domain; sequence GRIYNGKVIR…RQGRVRLSIK (69 aa).

The protein belongs to the polyribonucleotide nucleotidyltransferase family. Component of the RNA degradosome, which is a multiprotein complex involved in RNA processing and mRNA degradation. It depends on Mg(2+) as a cofactor.

Its subcellular location is the cytoplasm. The enzyme catalyses RNA(n+1) + phosphate = RNA(n) + a ribonucleoside 5'-diphosphate. In terms of biological role, involved in mRNA degradation. Catalyzes the phosphorolysis of single-stranded polyribonucleotides processively in the 3'- to 5'-direction. The polypeptide is Polyribonucleotide nucleotidyltransferase (Shewanella sp. (strain MR-4)).